Consider the following 568-residue polypeptide: DNA ligase (568 aa).

Residue E249 coordinates ATP. K251 functions as the N6-AMP-lysine intermediate in the catalytic mechanism. R256, R271, E301, F342, R418, and K424 together coordinate ATP.

The protein belongs to the ATP-dependent DNA ligase family. The cofactor is Mg(2+).

The enzyme catalyses ATP + (deoxyribonucleotide)n-3'-hydroxyl + 5'-phospho-(deoxyribonucleotide)m = (deoxyribonucleotide)n+m + AMP + diphosphate.. DNA ligase that seals nicks in double-stranded DNA during DNA replication, DNA recombination and DNA repair. The polypeptide is DNA ligase (Methanocella arvoryzae (strain DSM 22066 / NBRC 105507 / MRE50)).